The primary structure comprises 1387 residues: DNA-directed RNA polymerase subunit beta'' (1387 aa).

Residues Cys220, Cys291, Cys298, and Cys301 each coordinate Zn(2+).

The protein belongs to the RNA polymerase beta' chain family. RpoC2 subfamily. As to quaternary structure, in plastids the minimal PEP RNA polymerase catalytic core is composed of four subunits: alpha, beta, beta', and beta''. When a (nuclear-encoded) sigma factor is associated with the core the holoenzyme is formed, which can initiate transcription. Zn(2+) serves as cofactor.

It localises to the plastid. It is found in the chloroplast. The catalysed reaction is RNA(n) + a ribonucleoside 5'-triphosphate = RNA(n+1) + diphosphate. In terms of biological role, DNA-dependent RNA polymerase catalyzes the transcription of DNA into RNA using the four ribonucleoside triphosphates as substrates. The polypeptide is DNA-directed RNA polymerase subunit beta'' (Carica papaya (Papaya)).